The chain runs to 72 residues: Large ribosomal subunit protein bL31 (72 aa).

Zn(2+) is bound by residues C16, C18, C38, and C41.

This sequence belongs to the bacterial ribosomal protein bL31 family. Type A subfamily. In terms of assembly, part of the 50S ribosomal subunit. It depends on Zn(2+) as a cofactor.

Binds the 23S rRNA. The sequence is that of Large ribosomal subunit protein bL31 from Vibrio atlanticus (strain LGP32) (Vibrio splendidus (strain Mel32)).